A 207-amino-acid polypeptide reads, in one-letter code: Ribosomal RNA large subunit methyltransferase E (207 aa).

Residues Gly61, Trp63, Asp81, Asp97, and Asp122 each contribute to the S-adenosyl-L-methionine site. Lys162 functions as the Proton acceptor in the catalytic mechanism.

This sequence belongs to the class I-like SAM-binding methyltransferase superfamily. RNA methyltransferase RlmE family.

It is found in the cytoplasm. It carries out the reaction uridine(2552) in 23S rRNA + S-adenosyl-L-methionine = 2'-O-methyluridine(2552) in 23S rRNA + S-adenosyl-L-homocysteine + H(+). Specifically methylates the uridine in position 2552 of 23S rRNA at the 2'-O position of the ribose in the fully assembled 50S ribosomal subunit. The polypeptide is Ribosomal RNA large subunit methyltransferase E (Pseudomonas putida (strain ATCC 700007 / DSM 6899 / JCM 31910 / BCRC 17059 / LMG 24140 / F1)).